Reading from the N-terminus, the 210-residue chain is Large ribosomal subunit protein uL3 (210 aa).

The protein belongs to the universal ribosomal protein uL3 family. As to quaternary structure, part of the 50S ribosomal subunit. Forms a cluster with proteins L14 and L19.

Functionally, one of the primary rRNA binding proteins, it binds directly near the 3'-end of the 23S rRNA, where it nucleates assembly of the 50S subunit. This Geobacter sulfurreducens (strain ATCC 51573 / DSM 12127 / PCA) protein is Large ribosomal subunit protein uL3.